A 384-amino-acid chain; its full sequence is Gastrin-releasing peptide receptor (384 aa).

The Extracellular segment spans residues 1-39; the sequence is MDPNNCSHLNLEVDPFLSCNNTFNQTLNPPKMDNWFHPG. N-linked (GlcNAc...) asparagine glycans are attached at residues N5, N20, and N24. Residues 40-63 traverse the membrane as a helical segment; sequence IIYVIPAVYGLIIVIGLIGNITLI. Over 64–77 the chain is Cytoplasmic; it reads KIFCTVKSMRNVPN. Residues 78-97 traverse the membrane as a helical segment; sequence LFISSLALGDLLLLVTCAPV. Over 98–115 the chain is Extracellular; sequence DASKYLADRWLFGRIGCK. An intrachain disulfide couples C114 to C197. A helical transmembrane segment spans residues 116–137; that stretch reads LIPFIQLTSVGVSVFTLTALSA. The Cytoplasmic segment spans residues 138–153; that stretch reads DRYKAIVRPMDIQASH. A helical transmembrane segment spans residues 154–175; the sequence is ALMKICLKAALIWIVSMLLAIP. Residues 176–209 lie on the Extracellular side of the membrane; the sequence is EAVFSDLHPFHVKDTNQTFISCAPYPHSNELHPK. A helical transmembrane segment spans residues 210-235; it reads IHSMASFLVFYIIPLSIISVYYYFIA. Topologically, residues 236–265 are cytoplasmic; sequence RNLIQSAYNLPVEGNIHVKKQIESRKRLAK. The chain crosses the membrane as a helical span at residues 266 to 286; sequence TVLVFVGLFAFCWLPNHVIYL. Residues 287–299 are Extracellular-facing; it reads YRSYHYSEVDTSM. A helical membrane pass occupies residues 300-326; that stretch reads LHFITSICARLLAFTNSCVNPFALYLL. Residues 327 to 384 lie on the Cytoplasmic side of the membrane; sequence SKSFRKQFNTQLLCCQPSLLNRSHSTGRSTTCMTSFKSTNPSATFSLINGNICHEGYV. The S-palmitoyl cysteine moiety is linked to residue C340. S351 carries the post-translational modification Phosphoserine.

This sequence belongs to the G-protein coupled receptor 1 family. As to expression, expressed in the hippocampal CA1 region (at protein level).

The protein localises to the cell membrane. In terms of biological role, receptor for gastrin-releasing peptide (GRP). Signals via association with G proteins that activate a phosphatidylinositol-calcium second messenger system, resulting in Akt phosphorylation. Contributes to the regulation of food intake. Contributes to the perception of prurient stimuli and transmission of itch signals in the spinal cord that promote scratching behavior, but does not play a role in the perception of pain. Contributes primarily to nonhistaminergic itch sensation. In one study, shown to act in the amygdala as part of an inhibitory network which inhibits memory specifically related to learned fear. In another study, shown to contribute to disinhibition of glutamatergic cells in the auditory cortex via signaling on vasoactive intestinal peptide-expressing cells which leads to enhanced auditory fear memories. Contributes to the induction of sighing through signaling in the pre-Botzinger complex, a cluster of several thousand neurons in the ventrolateral medulla responsible for inspiration during respiratory activity. This Rattus norvegicus (Rat) protein is Gastrin-releasing peptide receptor (Grpr).